Here is a 546-residue protein sequence, read N- to C-terminus: Plastidic glucose transporter 4 (546 aa).

Helical transmembrane passes span 105-125 (VLPF…HLGV), 148-168 (WIVS…GALA), 182-202 (IPLA…TMIV), 205-225 (LLAG…ISEI), 240-260 (LFIC…AANP), 265-285 (TMFG…AFSP), 345-365 (VVSV…NAVV), 381-401 (VAAS…ASSL), 410-430 (LLLT…LSFT), 441-461 (LAVV…GPVP), 477-497 (AVAL…LYFL), and 503-523 (FGIS…VLYI).

This sequence belongs to the major facilitator superfamily. Sugar transporter (TC 2.A.1.1) family.

It is found in the plastid. The protein localises to the chloroplast inner membrane. Functionally, may be involved in the efflux of glucose towards the cytosol. This is Plastidic glucose transporter 4 from Arabidopsis thaliana (Mouse-ear cress).